A 1220-amino-acid polypeptide reads, in one-letter code: Formin-F (1220 aa).

Residues 1 to 10 show a composition bias toward basic residues; sequence MNRIFGRKKK. The interval 1-62 is disordered; it reads MNRIFGRKKK…TNSKSADKFD (62 aa). In terms of domain architecture, GBD/FH3 spans 6–373; sequence GRKKKDKDSD…QISVNKPMIG (368 aa). Residues 11–20 show a composition bias toward basic and acidic residues; the sequence is DKDSDEKGST. Over residues 41–56 the composition is skewed to polar residues; the sequence is AYSSLQPDGNNSTNSK. Residues 392 to 428 adopt a coiled-coil conformation; the sequence is VALQSEFQKNIEELAKVKDQLKKANFDLNIANQELSS. Disordered regions lie at residues 461–659, 711–732, and 1049–1192; these read IDSN…KFTV, SQKK…GTVS, and DEAK…KKDI. Composition is skewed to low complexity over residues 501 to 518 and 525 to 554; these read SKPP…SSSQ and SNLS…PQQQ. The FH1 domain occupies 532-655; it reads SDSLSNDFKS…NSNKPPANAP (124 aa). Residues 555–564 show a composition bias toward polar residues; that stretch reads NIESTLTPEP. Pro residues predominate over residues 575–638; it reads TTPPPAPPAP…GKGGPPPPPG (64 aa). The FH2 domain maps to 656 to 1054; the sequence is KFTVSKPTTK…AIKRDEAKAK (399 aa). Residues 711–722 are compositionally biased toward basic and acidic residues; it reads SQKKLEASDKKS. Residues 1032–1062 are a coiled coil; that stretch reads YKDFQRDKEAAERAIKRDEAKAKKAQQLKRM. Over residues 1066–1083 the composition is skewed to polar residues; the sequence is IASSTNNKNPLASSSTSV. In terms of domain architecture, DAD spans 1083–1158; the sequence is VGDGGMVEDI…TPSKSGSRRE (76 aa). Residues 1117-1142 show a composition bias toward low complexity; the sequence is DSSSITTISEQSENSNTSSITITTPS. A compositionally biased stretch (basic and acidic residues) spans 1161-1192; the sequence is TSKSSDKDKEKEKEKEKQCESTESEDINKKDI.

Belongs to the formin homology family. Diaphanous subfamily. Interacts (via GBD/FH3 domain) with activated Rho-GTPases.

Formins play an important role in the nucleation of actin and the formation of linear actin filaments. This chain is Formin-F (forF), found in Dictyostelium discoideum (Social amoeba).